Consider the following 486-residue polypeptide: NADH-quinone oxidoreductase subunit N 1 (486 aa).

14 helical membrane-spanning segments follow: residues 15–35 (FLPE…DPVI), 46–66 (ISLI…GIAG), 72–92 (MLMV…VGIL), 111–128 (YHAL…MAAS), 131–151 (LIMV…LAGY), 166–186 (FLLG…IYGL), 208–228 (FVGI…SAAP), 241–261 (PTPV…AIFL), 276–296 (QPLV…AAIL), 303–323 (MLAY…TAHS), 331–351 (MFYL…VSVL), 375–395 (AAMF…GGFF), 410–432 (IWLT…RILV), and 455–475 (FALI…GWVL).

Belongs to the complex I subunit 2 family. As to quaternary structure, NDH-1 is composed of 14 different subunits. Subunits NuoA, H, J, K, L, M, N constitute the membrane sector of the complex.

The protein localises to the cell inner membrane. It catalyses the reaction a quinone + NADH + 5 H(+)(in) = a quinol + NAD(+) + 4 H(+)(out). Functionally, NDH-1 shuttles electrons from NADH, via FMN and iron-sulfur (Fe-S) centers, to quinones in the respiratory chain. The immediate electron acceptor for the enzyme in this species is believed to be ubiquinone. Couples the redox reaction to proton translocation (for every two electrons transferred, four hydrogen ions are translocated across the cytoplasmic membrane), and thus conserves the redox energy in a proton gradient. The protein is NADH-quinone oxidoreductase subunit N 1 of Solibacter usitatus (strain Ellin6076).